A 685-amino-acid polypeptide reads, in one-letter code: Cilia- and flagella-associated protein 36 (685 aa).

Residues 1 to 20 (MLRRFSKKNKNPEGGSDDAS) are disordered. Residues 197 to 242 (SEELEMMAQNSRIQREALEQEIRKEEILLQQALDEGARAQNQNQNQ) are a coiled coil. Low complexity predominate over residues 287–310 (TGTMTSSTGVSVGTLTNTGVSSGT). A disordered region spans residues 287-573 (TGTMTSSTGV…LRGNKYDGDV (287 aa)). Residues 363–372 (EAEKSKRERP) are compositionally biased toward basic and acidic residues. Residues 410–434 (GTTSKKSIATVTASPEMSSKTTQME) are compositionally biased toward polar residues. Composition is skewed to basic and acidic residues over residues 439–456 (GEGK…ERKY) and 508–557 (HEPR…ESKP).

This sequence belongs to the CFAP36 family. As to expression, expressed in amphid and phasmid ciliated neurons.

It is found in the cell projection. It localises to the cilium. The protein resides in the cytoplasm. Its subcellular location is the cytoskeleton. The protein localises to the cilium axoneme. In Caenorhabditis elegans, this protein is Cilia- and flagella-associated protein 36.